A 199-amino-acid polypeptide reads, in one-letter code: dITP/XTP pyrophosphatase (199 aa).

T7–K12 provides a ligand contact to substrate. 2 residues coordinate Mg(2+): E37 and D66. The active-site Proton acceptor is D66. Substrate is bound by residues S67, F146 to D149, K169, and H174 to R175.

This sequence belongs to the HAM1 NTPase family. Homodimer. Mg(2+) serves as cofactor.

It catalyses the reaction XTP + H2O = XMP + diphosphate + H(+). The catalysed reaction is dITP + H2O = dIMP + diphosphate + H(+). It carries out the reaction ITP + H2O = IMP + diphosphate + H(+). Pyrophosphatase that catalyzes the hydrolysis of nucleoside triphosphates to their monophosphate derivatives, with a high preference for the non-canonical purine nucleotides XTP (xanthosine triphosphate), dITP (deoxyinosine triphosphate) and ITP. Seems to function as a house-cleaning enzyme that removes non-canonical purine nucleotides from the nucleotide pool, thus preventing their incorporation into DNA/RNA and avoiding chromosomal lesions. In Deinococcus geothermalis (strain DSM 11300 / CIP 105573 / AG-3a), this protein is dITP/XTP pyrophosphatase.